Reading from the N-terminus, the 535-residue chain is Probable histone-arginine methyltransferase 1.3 (535 aa).

Position 1 is an N-acetylmethionine (M1). One can recognise an SAM-dependent MTase PRMT-type domain in the interval 141 to 456 (EASSAKMYFH…QSYTIDLTLS (316 aa)). S-adenosyl-L-methionine is bound by residues Q158, R167, G191, E213, and E243. Catalysis depends on residues E257 and E266. S271 serves as a coordination point for S-adenosyl-L-methionine. A disordered region spans residues 494–517 (VAQEPPLQPQPELSTQQDIQTPND). The segment covering 507 to 516 (STQQDIQTPN) has biased composition (polar residues).

Belongs to the class I-like SAM-binding methyltransferase superfamily. Protein arginine N-methyltransferase family. Interacts with PQT3 in the nucleus. Ubiquitinated by PQT3.

The protein resides in the nucleus. It is found in the cytoplasm. It catalyses the reaction L-arginyl-[protein] + 2 S-adenosyl-L-methionine = N(omega),N(omega)-dimethyl-L-arginyl-[protein] + 2 S-adenosyl-L-homocysteine + 2 H(+). Its function is as follows. Methylates (mono- and asymmetric dimethylation) the guanidino nitrogens of arginyl residues in several proteins involved in DNA packaging, transcription regulation, and mRNA stability. Recruited to promoters upon gene activation, methylates histone H3 and activates transcription via chromatin remodeling. Positive regulator in the oxidative stress tolerance that promotes the expression of enzymes preventing oxidative stress such as APX1 and GPX1 by histone methylation (H3R17me2a). Confers tolerance to cadmium CdCl(2) and salt NaCl stresses. The sequence is that of Probable histone-arginine methyltransferase 1.3 (PRMT13) from Arabidopsis thaliana (Mouse-ear cress).